The primary structure comprises 215 residues: UPF0056 membrane protein bbp_248 (215 aa).

The next 6 helical transmembrane spans lie at 10 to 32, 52 to 74, 78 to 100, 119 to 141, 151 to 169, and 190 to 207; these read IYIS…PIFT, FSVA…LFGI, SFRI…GNFI, ISIV…TIVW, IFGC…WTLF, and IMGL…LAGL.

Belongs to the UPF0056 (MarC) family.

Its subcellular location is the cell membrane. The sequence is that of UPF0056 membrane protein bbp_248 from Buchnera aphidicola subsp. Baizongia pistaciae (strain Bp).